Reading from the N-terminus, the 300-residue chain is Probable alpha-L-glutamate ligase (300 aa).

In terms of domain architecture, ATP-grasp spans 104–287 (LQLLARQGID…IAGKMISWIE (184 aa)). ATP-binding positions include lysine 141, 178–179 (EY), aspartate 187, and 211–213 (RSN). Mg(2+) is bound by residues aspartate 248, glutamate 260, and asparagine 262. Mn(2+) is bound by residues aspartate 248, glutamate 260, and asparagine 262.

This sequence belongs to the RimK family. The cofactor is Mg(2+). It depends on Mn(2+) as a cofactor.

The chain is Probable alpha-L-glutamate ligase from Enterobacter sp. (strain 638).